A 453-amino-acid polypeptide reads, in one-letter code: Proton extrusion protein PxcA (453 aa).

A disordered region spans residues 147–189; that stretch reads SQDKETQTLDNKSTNQTNSKLSNNNKISSGQNDSRLESASQKT. The span at 154–163 shows a compositional bias: polar residues; sequence TLDNKSTNQT. The segment covering 164 to 175 has biased composition (low complexity); it reads NSKLSNNNKISS. Polar residues predominate over residues 176 to 189; sequence GQNDSRLESASQKT. Transmembrane regions (helical) follow at residues 235–255, 330–350, 377–397, and 413–433; these read FILL…TFLL, SIGN…VIVS, LIIL…WEVI, and FNFL…KYWI.

This sequence belongs to the CemA family.

The protein localises to the cell inner membrane. Its function is as follows. Required for H(+) efflux immediately after light irradiation to form a rapid H(+) concentration gradient across the thylakoid membranes. Together with PxcL, contributes to transient H(+) uptake following dark to light transition. This chain is Proton extrusion protein PxcA, found in Crocosphaera subtropica (strain ATCC 51142 / BH68) (Cyanothece sp. (strain ATCC 51142)).